A 90-amino-acid polypeptide reads, in one-letter code: Progonadoliberin-3 (90 aa).

An N-terminal signal peptide occupies residues 1 to 23 (MEASSRVTVQVLLLALVVQVTLS). Gln24 carries the pyrrolidone carboxylic acid modification. Gly33 bears the Glycine amide mark.

The protein belongs to the GnRH family.

It localises to the secreted. Functionally, stimulates the secretion of gonadotropins. This is Progonadoliberin-3 (gnrh3) from Pagrus major (Red sea bream).